Here is a 407-residue protein sequence, read N- to C-terminus: Na(+)-translocating NADH-quinone reductase subunit F (407 aa).

Residues 3–23 (IILGVVMFTLIVLALVLVILF) traverse the membrane as a helical segment. The 95-residue stretch at 32–126 (GDITISVNDD…DMDIELPEEI (95 aa)) folds into the 2Fe-2S ferredoxin-type domain. [2Fe-2S] cluster is bound by residues Cys69, Cys75, Cys78, and Cys110. Residues 129 to 269 (VKKWECTVIS…SGPFGEFFAK (141 aa)) enclose the FAD-binding FR-type domain. A catalytic region spans residues 272–389 (DAEMVFVGGG…PMMNAAVIGM (118 aa)).

Belongs to the NqrF family. In terms of assembly, composed of six subunits; NqrA, NqrB, NqrC, NqrD, NqrE and NqrF. The cofactor is [2Fe-2S] cluster. FAD is required as a cofactor.

It is found in the cell inner membrane. It catalyses the reaction a ubiquinone + n Na(+)(in) + NADH + H(+) = a ubiquinol + n Na(+)(out) + NAD(+). In terms of biological role, NQR complex catalyzes the reduction of ubiquinone-1 to ubiquinol by two successive reactions, coupled with the transport of Na(+) ions from the cytoplasm to the periplasm. The first step is catalyzed by NqrF, which accepts electrons from NADH and reduces ubiquinone-1 to ubisemiquinone by a one-electron transfer pathway. The chain is Na(+)-translocating NADH-quinone reductase subunit F from Vibrio campbellii (strain ATCC BAA-1116).